Reading from the N-terminus, the 704-residue chain is DNA ligase (704 aa).

Residues 43–47 (DADYD), 92–93 (SL), and Glu124 contribute to the NAD(+) site. Lys126 functions as the N6-AMP-lysine intermediate in the catalytic mechanism. Residues Arg147, Glu182, Lys298, and Lys322 each contribute to the NAD(+) site. 4 residues coordinate Zn(2+): Cys427, Cys430, Cys445, and Cys451. A BRCT domain is found at 625–704 (PVASPVAGKI…DGWLRLIGDA (80 aa)).

This sequence belongs to the NAD-dependent DNA ligase family. LigA subfamily. Mg(2+) is required as a cofactor. Mn(2+) serves as cofactor.

It carries out the reaction NAD(+) + (deoxyribonucleotide)n-3'-hydroxyl + 5'-phospho-(deoxyribonucleotide)m = (deoxyribonucleotide)n+m + AMP + beta-nicotinamide D-nucleotide.. In terms of biological role, DNA ligase that catalyzes the formation of phosphodiester linkages between 5'-phosphoryl and 3'-hydroxyl groups in double-stranded DNA using NAD as a coenzyme and as the energy source for the reaction. It is essential for DNA replication and repair of damaged DNA. The polypeptide is DNA ligase (Cereibacter sphaeroides (strain ATCC 17023 / DSM 158 / JCM 6121 / CCUG 31486 / LMG 2827 / NBRC 12203 / NCIMB 8253 / ATH 2.4.1.) (Rhodobacter sphaeroides)).